The following is a 481-amino-acid chain: Sucrose phosphorylase (481 aa).

Residues D49, H87, 191 to 193, E234, 291 to 292, 335 to 338, and R392 contribute to the sucrose site; these read RLD, HD, and DIYQ. D193 acts as the Nucleophile in catalysis. The Proton donor role is filled by E234.

It belongs to the glycosyl hydrolase 13 family. Sucrose phosphorylase subfamily.

Its subcellular location is the cytoplasm. It carries out the reaction sucrose + phosphate = D-fructose + alpha-D-glucose 1-phosphate. In terms of biological role, intracellular catabolism of sucrose. Being intracellular, probably not involved in synthesis of extracellular polysaccharides. The protein is Sucrose phosphorylase of Streptococcus mutans serotype c (strain ATCC 700610 / UA159).